The primary structure comprises 186 residues: Large ribosomal subunit protein uL10 (186 aa).

Belongs to the universal ribosomal protein uL10 family. In terms of assembly, part of the ribosomal stalk of the 50S ribosomal subunit. The N-terminus interacts with L11 and the large rRNA to form the base of the stalk. The C-terminus forms an elongated spine to which L12 dimers bind in a sequential fashion forming a multimeric L10(L12)X complex.

Its function is as follows. Forms part of the ribosomal stalk, playing a central role in the interaction of the ribosome with GTP-bound translation factors. In Streptomyces virginiae (Streptomyces cinnamonensis), this protein is Large ribosomal subunit protein uL10 (rplJ).